Reading from the N-terminus, the 101-residue chain is NAD(P)H-quinone oxidoreductase subunit 4L, chloroplastic (101 aa).

3 helical membrane passes run 2–22 (ILEH…YGLI), 32–52 (MCLE…SDFF), and 61–81 (IFSI…PAIL).

Belongs to the complex I subunit 4L family. In terms of assembly, NDH is composed of at least 16 different subunits, 5 of which are encoded in the nucleus.

It localises to the plastid. Its subcellular location is the chloroplast thylakoid membrane. The enzyme catalyses a plastoquinone + NADH + (n+1) H(+)(in) = a plastoquinol + NAD(+) + n H(+)(out). It catalyses the reaction a plastoquinone + NADPH + (n+1) H(+)(in) = a plastoquinol + NADP(+) + n H(+)(out). Its function is as follows. NDH shuttles electrons from NAD(P)H:plastoquinone, via FMN and iron-sulfur (Fe-S) centers, to quinones in the photosynthetic chain and possibly in a chloroplast respiratory chain. The immediate electron acceptor for the enzyme in this species is believed to be plastoquinone. Couples the redox reaction to proton translocation, and thus conserves the redox energy in a proton gradient. In Platanus occidentalis (Sycamore), this protein is NAD(P)H-quinone oxidoreductase subunit 4L, chloroplastic.